The primary structure comprises 77 residues: DNA-directed RNA polymerase subunit epsilon (77 aa).

It belongs to the RNA polymerase subunit epsilon family. As to quaternary structure, RNAP is composed of a core of 2 alpha, a beta and a beta' subunit. The core is associated with a delta subunit, and at least one of epsilon or omega. When a sigma factor is associated with the core the holoenzyme is formed, which can initiate transcription.

The enzyme catalyses RNA(n) + a ribonucleoside 5'-triphosphate = RNA(n+1) + diphosphate. A non-essential component of RNA polymerase (RNAP). This is DNA-directed RNA polymerase subunit epsilon from Streptococcus pneumoniae (strain Hungary19A-6).